The following is a 417-amino-acid chain: Cysteate synthase (417 aa).

Residue Lys102 is modified to N6-(pyridoxal phosphate)lysine. Pyridoxal 5'-phosphate is bound by residues Asn128 and Thr380.

The protein belongs to the threonine synthase family. Cysteate synthase subfamily. In terms of assembly, homotrimer. It depends on pyridoxal 5'-phosphate as a cofactor.

The enzyme catalyses O-phospho-L-serine + sulfite + H(+) = L-cysteate + phosphate. Its pathway is cofactor biosynthesis; coenzyme M biosynthesis. Functionally, specifically catalyzes the beta-elimination of phosphate from L-phosphoserine and the beta-addition of sulfite to the dehydroalanine intermediate to produce L-cysteate. This chain is Cysteate synthase, found in Methanocella arvoryzae (strain DSM 22066 / NBRC 105507 / MRE50).